Consider the following 1374-residue polypeptide: DNA-directed RNA polymerase subunit beta (1374 aa).

The protein belongs to the RNA polymerase beta chain family. In terms of assembly, the RNAP catalytic core consists of 2 alpha, 1 beta, 1 beta' and 1 omega subunit. When a sigma factor is associated with the core the holoenzyme is formed, which can initiate transcription.

The catalysed reaction is RNA(n) + a ribonucleoside 5'-triphosphate = RNA(n+1) + diphosphate. In terms of biological role, DNA-dependent RNA polymerase catalyzes the transcription of DNA into RNA using the four ribonucleoside triphosphates as substrates. The polypeptide is DNA-directed RNA polymerase subunit beta (Rhodopseudomonas palustris (strain TIE-1)).